Reading from the N-terminus, the 254-residue chain is Imidazole glycerol phosphate synthase subunit HisF (254 aa).

Catalysis depends on residues Asp11 and Asp130.

This sequence belongs to the HisA/HisF family. Heterodimer of HisH and HisF.

It is found in the cytoplasm. The enzyme catalyses 5-[(5-phospho-1-deoxy-D-ribulos-1-ylimino)methylamino]-1-(5-phospho-beta-D-ribosyl)imidazole-4-carboxamide + L-glutamine = D-erythro-1-(imidazol-4-yl)glycerol 3-phosphate + 5-amino-1-(5-phospho-beta-D-ribosyl)imidazole-4-carboxamide + L-glutamate + H(+). The protein operates within amino-acid biosynthesis; L-histidine biosynthesis; L-histidine from 5-phospho-alpha-D-ribose 1-diphosphate: step 5/9. In terms of biological role, IGPS catalyzes the conversion of PRFAR and glutamine to IGP, AICAR and glutamate. The HisF subunit catalyzes the cyclization activity that produces IGP and AICAR from PRFAR using the ammonia provided by the HisH subunit. This chain is Imidazole glycerol phosphate synthase subunit HisF, found in Halorhodospira halophila (strain DSM 244 / SL1) (Ectothiorhodospira halophila (strain DSM 244 / SL1)).